The following is a 363-amino-acid chain: NAD(P)H-quinone oxidoreductase subunit 1, chloroplastic (363 aa).

6 consecutive transmembrane segments (helical) span residues 30–50 (LVPIFTPVLGITIGVLAIVWL), 98–118 (FSIGPSIAVISILLSYLIIPF), 129–149 (IGVFLWIAISSIAPIGLLMSG), 248–268 (YSGIKFGLFYVASYLNLLVSS), 300–320 (VFGTTIGIFITLAKTYLFLFI), and 336–356 (LLNLGWKFLLPISLGNLLLTT).

It belongs to the complex I subunit 1 family. As to quaternary structure, NDH is composed of at least 16 different subunits, 5 of which are encoded in the nucleus.

The protein localises to the plastid. It localises to the chloroplast thylakoid membrane. It carries out the reaction a plastoquinone + NADH + (n+1) H(+)(in) = a plastoquinol + NAD(+) + n H(+)(out). It catalyses the reaction a plastoquinone + NADPH + (n+1) H(+)(in) = a plastoquinol + NADP(+) + n H(+)(out). In terms of biological role, NDH shuttles electrons from NAD(P)H:plastoquinone, via FMN and iron-sulfur (Fe-S) centers, to quinones in the photosynthetic chain and possibly in a chloroplast respiratory chain. The immediate electron acceptor for the enzyme in this species is believed to be plastoquinone. Couples the redox reaction to proton translocation, and thus conserves the redox energy in a proton gradient. In Vitis vinifera (Grape), this protein is NAD(P)H-quinone oxidoreductase subunit 1, chloroplastic.